A 75-amino-acid chain; its full sequence is RNA-binding protein KhpA (75 aa).

Residues 29–75 (KKVYEIVVNEEDVGQVIGKDGRTIKSLKILLSALMGDSKEITIKVVR) form the KH domain.

Belongs to the KhpA RNA-binding protein family. In terms of assembly, forms a complex with KhpB.

It localises to the cytoplasm. Functionally, a probable RNA chaperone. Forms a complex with KhpB which binds to cellular RNA and controls its expression. Plays a role in peptidoglycan (PG) homeostasis and cell length regulation. In Thermotoga maritima (strain ATCC 43589 / DSM 3109 / JCM 10099 / NBRC 100826 / MSB8), this protein is RNA-binding protein KhpA.